The chain runs to 486 residues: tRNA sulfurtransferase (486 aa).

The 105-residue stretch at 61 to 165 (AILIDVLGRI…NDHMMLIKAR (105 aa)) folds into the THUMP domain. Residues 183–184 (LI), K265, G287, and Q296 contribute to the ATP site. A disulfide bridge links C344 with C456. Residues 404–481 (LSANDVILDI…NGFANVRVFA (78 aa)) form the Rhodanese domain. C456 serves as the catalytic Cysteine persulfide intermediate.

It belongs to the ThiI family.

The protein localises to the cytoplasm. The enzyme catalyses [ThiI sulfur-carrier protein]-S-sulfanyl-L-cysteine + a uridine in tRNA + 2 reduced [2Fe-2S]-[ferredoxin] + ATP + H(+) = [ThiI sulfur-carrier protein]-L-cysteine + a 4-thiouridine in tRNA + 2 oxidized [2Fe-2S]-[ferredoxin] + AMP + diphosphate. It carries out the reaction [ThiS sulfur-carrier protein]-C-terminal Gly-Gly-AMP + S-sulfanyl-L-cysteinyl-[cysteine desulfurase] + AH2 = [ThiS sulfur-carrier protein]-C-terminal-Gly-aminoethanethioate + L-cysteinyl-[cysteine desulfurase] + A + AMP + 2 H(+). Its pathway is cofactor biosynthesis; thiamine diphosphate biosynthesis. Functionally, catalyzes the ATP-dependent transfer of a sulfur to tRNA to produce 4-thiouridine in position 8 of tRNAs, which functions as a near-UV photosensor. Also catalyzes the transfer of sulfur to the sulfur carrier protein ThiS, forming ThiS-thiocarboxylate. This is a step in the synthesis of thiazole, in the thiamine biosynthesis pathway. The sulfur is donated as persulfide by IscS. The chain is tRNA sulfurtransferase from Mannheimia succiniciproducens (strain KCTC 0769BP / MBEL55E).